The primary structure comprises 192 residues: Bifunctional protein PyrR (192 aa).

Positions 107–119 (VVLVDDVLFSGRT) match the PRPP-binding motif.

Belongs to the purine/pyrimidine phosphoribosyltransferase family. PyrR subfamily.

It carries out the reaction UMP + diphosphate = 5-phospho-alpha-D-ribose 1-diphosphate + uracil. Functionally, regulates the transcription of the pyrimidine nucleotide (pyr) operon in response to exogenous pyrimidines. Also displays a weak uracil phosphoribosyltransferase activity which is not physiologically significant. This is Bifunctional protein PyrR from Corynebacterium efficiens (strain DSM 44549 / YS-314 / AJ 12310 / JCM 11189 / NBRC 100395).